Reading from the N-terminus, the 349-residue chain is Fe(3+) ions import ATP-binding protein FbpC (349 aa).

An ABC transporter domain is found at 7-237 (LVLKNVTKAF…PNSLFLANFM (231 aa)). 39 to 46 (GPSGCGKT) serves as a coordination point for ATP.

This sequence belongs to the ABC transporter superfamily. Fe(3+) ion importer (TC 3.A.1.10) family. In terms of assembly, the complex is composed of two ATP-binding proteins (FbpC), two transmembrane proteins (FbpB) and a solute-binding protein (FbpA).

The protein resides in the cell inner membrane. It catalyses the reaction Fe(3+)(out) + ATP + H2O = Fe(3+)(in) + ADP + phosphate + H(+). In terms of biological role, part of the ABC transporter complex FbpABC involved in Fe(3+) ions import. Responsible for energy coupling to the transport system. The chain is Fe(3+) ions import ATP-binding protein FbpC from Pasteurella multocida (strain Pm70).